A 185-amino-acid chain; its full sequence is Elongation factor P (185 aa).

Belongs to the elongation factor P family.

It localises to the cytoplasm. It participates in protein biosynthesis; polypeptide chain elongation. In terms of biological role, involved in peptide bond synthesis. Stimulates efficient translation and peptide-bond synthesis on native or reconstituted 70S ribosomes in vitro. Probably functions indirectly by altering the affinity of the ribosome for aminoacyl-tRNA, thus increasing their reactivity as acceptors for peptidyl transferase. The sequence is that of Elongation factor P from Bordetella petrii (strain ATCC BAA-461 / DSM 12804 / CCUG 43448).